A 559-amino-acid chain; its full sequence is Inositol-3-phosphate synthase 1 (559 aa).

Gly67, Gly68, Asn69, Asn70, Asp141, Ser177, Val178, Gln188, Arg191, Thr228, Ala229, Asn230, Thr231, Gly278, Ser279, Asp303, Ser306, Asn337, Asn338, Asp339, and Lys352 together coordinate NAD(+). At Ser279 the chain carries Phosphoserine. Residue Ser357 is modified to Phosphoserine. Gly390, Asp391, Asp419, and Ser420 together coordinate NAD(+).

This sequence belongs to the myo-inositol 1-phosphate synthase family. The cofactor is NAD(+).

The protein resides in the cytoplasm. It carries out the reaction D-glucose 6-phosphate = 1D-myo-inositol 3-phosphate. The protein operates within polyol metabolism; myo-inositol biosynthesis; myo-inositol from D-glucose 6-phosphate: step 1/2. Key enzyme in myo-inositol biosynthesis pathway that catalyzes the conversion of glucose 6-phosphate to 1-myo-inositol 1-phosphate in a NAD-dependent manner. Rate-limiting enzyme in the synthesis of all inositol-containing compounds. The sequence is that of Inositol-3-phosphate synthase 1 (ISYNA1) from Macaca fascicularis (Crab-eating macaque).